Consider the following 417-residue polypeptide: UDP-N-acetylglucosamine 1-carboxyvinyltransferase (417 aa).

22-23 (KN) lines the phosphoenolpyruvate pocket. Arg-92 provides a ligand contact to UDP-N-acetyl-alpha-D-glucosamine. The Proton donor role is filled by Cys-116. Residue Cys-116 is modified to 2-(S-cysteinyl)pyruvic acid O-phosphothioketal. UDP-N-acetyl-alpha-D-glucosamine-binding residues include Asp-304 and Ile-326.

The protein belongs to the EPSP synthase family. MurA subfamily.

It localises to the cytoplasm. The enzyme catalyses phosphoenolpyruvate + UDP-N-acetyl-alpha-D-glucosamine = UDP-N-acetyl-3-O-(1-carboxyvinyl)-alpha-D-glucosamine + phosphate. The protein operates within cell wall biogenesis; peptidoglycan biosynthesis. In terms of biological role, cell wall formation. Adds enolpyruvyl to UDP-N-acetylglucosamine. In Geotalea uraniireducens (strain Rf4) (Geobacter uraniireducens), this protein is UDP-N-acetylglucosamine 1-carboxyvinyltransferase.